A 75-amino-acid chain; its full sequence is Putative antitoxin VapB17 (75 aa).

In terms of biological role, putative antitoxin component of a possible type II toxin-antitoxin (TA) system. The cognate toxin is VapC17. This is Putative antitoxin VapB17 (vapB17) from Mycobacterium tuberculosis (strain CDC 1551 / Oshkosh).